Reading from the N-terminus, the 208-residue chain is N-(5'-phosphoribosyl)anthranilate isomerase (208 aa).

It belongs to the TrpF family.

It catalyses the reaction N-(5-phospho-beta-D-ribosyl)anthranilate = 1-(2-carboxyphenylamino)-1-deoxy-D-ribulose 5-phosphate. The protein operates within amino-acid biosynthesis; L-tryptophan biosynthesis; L-tryptophan from chorismate: step 3/5. This chain is N-(5'-phosphoribosyl)anthranilate isomerase, found in Natronomonas pharaonis (strain ATCC 35678 / DSM 2160 / CIP 103997 / JCM 8858 / NBRC 14720 / NCIMB 2260 / Gabara) (Halobacterium pharaonis).